Consider the following 79-residue polypeptide: Protein OPG081 (79 aa).

Residues 1-3 lie on the Intravirion side of the membrane; the sequence is MAD. The chain crosses the membrane as a helical span at residues 4–24; sequence AITVLTAIGITVLMLLMVISG. Residues 25-47 are Virion surface-facing; it reads TAMIVKELNPNDIFTMQSLKFNR. Residues 48–68 traverse the membrane as a helical segment; it reads AVTIFKYIGLFIYIPGTIILY. Over 69-79 the chain is Intravirion; that stretch reads ATYIKSLLMKS.

Belongs to the orthopoxvirus OPG081 family.

It localises to the virion membrane. Envelope protein. In Variola virus, this protein is Protein OPG081 (OPG081).